A 479-amino-acid chain; its full sequence is Ribosomal RNA small subunit methyltransferase F (479 aa).

S-adenosyl-L-methionine is bound by residues 125–131, Glu-149, Asp-176, and Asp-194; that span reads AAAPGSK. Residue Cys-247 is the Nucleophile of the active site.

It belongs to the class I-like SAM-binding methyltransferase superfamily. RsmB/NOP family.

The protein localises to the cytoplasm. It catalyses the reaction cytidine(1407) in 16S rRNA + S-adenosyl-L-methionine = 5-methylcytidine(1407) in 16S rRNA + S-adenosyl-L-homocysteine + H(+). Its function is as follows. Specifically methylates the cytosine at position 1407 (m5C1407) of 16S rRNA. In Escherichia coli O17:K52:H18 (strain UMN026 / ExPEC), this protein is Ribosomal RNA small subunit methyltransferase F.